Consider the following 292-residue polypeptide: AKT-interacting protein (292 aa).

Positions 1-63 (MNPLWSMSAG…TSPAPAAQST (63 aa)) are disordered. A compositionally biased stretch (basic and acidic residues) spans 14–23 (KRAEGEEKTL). Position 30 is a phosphoserine (Ser30). Positions 74–222 (YLEYSLLAEF…VVDSVKVCTA (149 aa)) constitute a UBC core domain.

The protein belongs to the ubiquitin-conjugating enzyme family. FTS subfamily. As to quaternary structure, component of the FTS/Hook/FHIP complex (FHF complex), composed of AKTIP/FTS, FHIP1B, and one or more members of the Hook family of proteins HOOK1, HOOK2, and HOOK3. Interacts directly with HOOK1, HOOK2 and HOOK3. The FHF complex associates with the homotypic vesicular sorting complex (the HOPS complex). Also interacts with AKT1. May interact with FHIP1A. In terms of tissue distribution, ubiquitous. Highest expression in kidney, testis and brain and lowest in spleen and liver.

It is found in the cytoplasm. It localises to the cell membrane. In terms of biological role, component of the FTS/Hook/FHIP complex (FHF complex). The FHF complex may function to promote vesicle trafficking and/or fusion via the homotypic vesicular protein sorting complex (the HOPS complex). Regulates apoptosis by enhancing phosphorylation and activation of AKT1. Increases release of TNFSF6 via the AKT1/GSK3B/NFATC1 signaling cascade. FHF complex promotes the distribution of AP-4 complex to the perinuclear area of the cell. This chain is AKT-interacting protein (Aktip), found in Mus musculus (Mouse).